A 123-amino-acid polypeptide reads, in one-letter code: Small ribosomal subunit protein uS12 (123 aa).

Residue Asp-89 is modified to 3-methylthioaspartic acid. Residues 103-123 form a disordered region; the sequence is DTSGVQDRRQGRSKYGAKRPK. Over residues 113 to 123 the composition is skewed to basic residues; the sequence is GRSKYGAKRPK.

The protein belongs to the universal ribosomal protein uS12 family. Part of the 30S ribosomal subunit. Contacts proteins S8 and S17. May interact with IF1 in the 30S initiation complex.

Functionally, with S4 and S5 plays an important role in translational accuracy. In terms of biological role, interacts with and stabilizes bases of the 16S rRNA that are involved in tRNA selection in the A site and with the mRNA backbone. Located at the interface of the 30S and 50S subunits, it traverses the body of the 30S subunit contacting proteins on the other side and probably holding the rRNA structure together. The combined cluster of proteins S8, S12 and S17 appears to hold together the shoulder and platform of the 30S subunit. In Nitratidesulfovibrio vulgaris (strain ATCC 29579 / DSM 644 / CCUG 34227 / NCIMB 8303 / VKM B-1760 / Hildenborough) (Desulfovibrio vulgaris), this protein is Small ribosomal subunit protein uS12.